The chain runs to 66 residues: MSDGDTNGPTGPIDRRMLEALVCPMTQAPLSYDAEKQELISKAAHLAYPIRGGIPIMLEEEARKLD.

The protein belongs to the UPF0434 family.

In Jannaschia sp. (strain CCS1), this protein is UPF0434 protein Jann_0424.